The chain runs to 276 residues: NH(3)-dependent NAD(+) synthetase (276 aa).

43–50 contributes to the ATP binding site; the sequence is GISGGVDS. Aspartate 49 contacts Mg(2+). Arginine 146 contacts deamido-NAD(+). Threonine 166 contacts ATP. Residue glutamate 171 coordinates Mg(2+). Deamido-NAD(+)-binding residues include lysine 179 and aspartate 186. ATP-binding residues include lysine 195 and threonine 217. 266 to 267 provides a ligand contact to deamido-NAD(+); it reads HK.

Belongs to the NAD synthetase family. In terms of assembly, homodimer.

The catalysed reaction is deamido-NAD(+) + NH4(+) + ATP = AMP + diphosphate + NAD(+) + H(+). Its pathway is cofactor biosynthesis; NAD(+) biosynthesis; NAD(+) from deamido-NAD(+) (ammonia route): step 1/1. In terms of biological role, catalyzes the ATP-dependent amidation of deamido-NAD to form NAD. Uses ammonia as a nitrogen source. This is NH(3)-dependent NAD(+) synthetase from Shewanella sediminis (strain HAW-EB3).